Consider the following 571-residue polypeptide: Proline--tRNA ligase (571 aa).

Belongs to the class-II aminoacyl-tRNA synthetase family. ProS type 1 subfamily. Homodimer.

Its subcellular location is the cytoplasm. The enzyme catalyses tRNA(Pro) + L-proline + ATP = L-prolyl-tRNA(Pro) + AMP + diphosphate. Functionally, catalyzes the attachment of proline to tRNA(Pro) in a two-step reaction: proline is first activated by ATP to form Pro-AMP and then transferred to the acceptor end of tRNA(Pro). As ProRS can inadvertently accommodate and process non-cognate amino acids such as alanine and cysteine, to avoid such errors it has two additional distinct editing activities against alanine. One activity is designated as 'pretransfer' editing and involves the tRNA(Pro)-independent hydrolysis of activated Ala-AMP. The other activity is designated 'posttransfer' editing and involves deacylation of mischarged Ala-tRNA(Pro). The misacylated Cys-tRNA(Pro) is not edited by ProRS. The polypeptide is Proline--tRNA ligase (Vibrio vulnificus (strain CMCP6)).